Here is a 346-residue protein sequence, read N- to C-terminus: Parapinopsin (346 aa).

The Extracellular segment spans residues 1-29; sequence MASIILINFSETDTLHLGSVNDHIMPRIG. N-linked (GlcNAc...) asparagine glycosylation occurs at Asn-8. The chain crosses the membrane as a helical span at residues 30–54; it reads YTILSIIMALSSTFGIILNMVVIIV. Over 55-66 the chain is Cytoplasmic; sequence TVRYKQLRQPLN. The chain crosses the membrane as a helical span at residues 67-91; the sequence is YALVNLAVADLGCPVFGGLLTAVTN. Topologically, residues 92-106 are extracellular; the sequence is AMGYFSLGRVGCVLE. Cysteines 103 and 180 form a disulfide. Residues 107–126 form a helical membrane-spanning segment; sequence GFAVAFFGIAGLCSVAVIAV. The Cytoplasmic segment spans residues 127–145; it reads DRYMVVCRPLGAVMFQTKH. Residues 146 to 169 traverse the membrane as a helical segment; sequence ALAGVVFSWVWSFIWNTPPLFGWG. At 170–193 the chain is on the extracellular side; sequence SYQLEGVMTSCAPNWYRRDPVNVS. N-linked (GlcNAc...) asparagine glycosylation occurs at Asn-191. A helical membrane pass occupies residues 194 to 221; sequence YILCYFMLCFALPFATIIFSYMHLLHTL. The Cytoplasmic segment spans residues 222 to 244; that stretch reads WQVAKLQVADSGSTAKVEVQVAR. Residues 245 to 268 form a helical membrane-spanning segment; the sequence is MVVIMVMAFLLTWLPYAAFALTVI. Over 269 to 276 the chain is Extracellular; sequence IDSNIYIN. Residues 277 to 301 form a helical membrane-spanning segment; sequence PVIGTIPAYLAKSSTVFNPIIYIFM. Lys-288 carries the post-translational modification N6-(retinylidene)lysine. The Cytoplasmic segment spans residues 302-346; sequence NRQFRDYALPCLLCGKNPWAAKEGRDSDTNTLTTTVSKNTSVSPL. Cys-315 carries the S-palmitoyl cysteine lipid modification. Positions 325–346 are disordered; that stretch reads GRDSDTNTLTTTVSKNTSVSPL. Over residues 330-346 the composition is skewed to low complexity; it reads TNTLTTTVSKNTSVSPL.

The protein belongs to the G-protein coupled receptor 1 family. Opsin subfamily. Phosphorylated on some or all of the serine and threonine residues present in the C-terminal region. As to expression, parapineal organ.

The protein resides in the membrane. This is Parapinopsin from Ictalurus punctatus (Channel catfish).